A 350-amino-acid polypeptide reads, in one-letter code: Biotin synthase (350 aa).

Positions 38–262 constitute a Radical SAM core domain; the sequence is RQVQVSTLLS…MMPTSYVRLS (225 aa). 3 residues coordinate [4Fe-4S] cluster: cysteine 53, cysteine 57, and cysteine 60. [2Fe-2S] cluster is bound by residues cysteine 97, cysteine 128, cysteine 188, and arginine 260.

The protein belongs to the radical SAM superfamily. Biotin synthase family. Homodimer. [4Fe-4S] cluster serves as cofactor. [2Fe-2S] cluster is required as a cofactor.

The catalysed reaction is (4R,5S)-dethiobiotin + (sulfur carrier)-SH + 2 reduced [2Fe-2S]-[ferredoxin] + 2 S-adenosyl-L-methionine = (sulfur carrier)-H + biotin + 2 5'-deoxyadenosine + 2 L-methionine + 2 oxidized [2Fe-2S]-[ferredoxin]. It participates in cofactor biosynthesis; biotin biosynthesis; biotin from 7,8-diaminononanoate: step 2/2. Its function is as follows. Catalyzes the conversion of dethiobiotin (DTB) to biotin by the insertion of a sulfur atom into dethiobiotin via a radical-based mechanism. The chain is Biotin synthase from Yersinia enterocolitica serotype O:8 / biotype 1B (strain NCTC 13174 / 8081).